We begin with the raw amino-acid sequence, 70 residues long: Translation initiation factor IF-1 (70 aa).

Residues 1-70 (MKNDKLFLTG…LKLGRITQRK (70 aa)) enclose the S1-like domain.

The protein belongs to the IF-1 family. In terms of assembly, component of the 30S ribosomal translation pre-initiation complex which assembles on the 30S ribosome in the order IF-2 and IF-3, IF-1 and N-formylmethionyl-tRNA(fMet); mRNA recruitment can occur at any time during PIC assembly.

It is found in the cytoplasm. In terms of biological role, one of the essential components for the initiation of protein synthesis. Stabilizes the binding of IF-2 and IF-3 on the 30S subunit to which N-formylmethionyl-tRNA(fMet) subsequently binds. Helps modulate mRNA selection, yielding the 30S pre-initiation complex (PIC). Upon addition of the 50S ribosomal subunit IF-1, IF-2 and IF-3 are released leaving the mature 70S translation initiation complex. This Mycoplasma genitalium (strain ATCC 33530 / DSM 19775 / NCTC 10195 / G37) (Mycoplasmoides genitalium) protein is Translation initiation factor IF-1.